The following is a 320-amino-acid chain: Cytochrome f (320 aa).

Residues 1 to 35 (MQNRNTFSWVKEEMTRFISVSIMIYVITRTSISNA) form the signal peptide. Residues tyrosine 36, cysteine 56, cysteine 59, and histidine 60 each contribute to the heme site. Residues 286–306 (VQGLLFFLASVILAQIFLVLK) traverse the membrane as a helical segment.

This sequence belongs to the cytochrome f family. In terms of assembly, the 4 large subunits of the cytochrome b6-f complex are cytochrome b6, subunit IV (17 kDa polypeptide, petD), cytochrome f and the Rieske protein, while the 4 small subunits are PetG, PetL, PetM and PetN. The complex functions as a dimer. Heme is required as a cofactor.

The protein resides in the plastid. The protein localises to the chloroplast thylakoid membrane. Component of the cytochrome b6-f complex, which mediates electron transfer between photosystem II (PSII) and photosystem I (PSI), cyclic electron flow around PSI, and state transitions. This chain is Cytochrome f, found in Calycanthus floridus var. glaucus (Eastern sweetshrub).